Reading from the N-terminus, the 517-residue chain is Dopamine receptor 4 (517 aa).

Topologically, residues Met-1–Ala-46 are extracellular. Residue Asn-25 is glycosylated (N-linked (GlcNAc...) asparagine). Residues Ile-47 to Val-67 form a helical membrane-spanning segment. Residues Cys-68 to Thr-77 lie on the Cytoplasmic side of the membrane. Residues Gly-78–Met-98 form a helical membrane-spanning segment. At Asn-99–Thr-108 the chain is on the extracellular side. N-linked (GlcNAc...) asparagine glycosylation is present at Asn-106. Residues Trp-109 to Ala-129 traverse the membrane as a helical segment. Over Ser-130 to Arg-159 the chain is Cytoplasmic. A helical transmembrane segment spans residues Ile-160 to Ile-180. Topologically, residues Trp-181–Ser-209 are extracellular. Residues Leu-210 to Ile-230 traverse the membrane as a helical segment. The Cytoplasmic portion of the chain corresponds to Ala-231 to Thr-409. A disordered region spans residues Asn-309–Ser-339. Residues Leu-410 to Leu-430 traverse the membrane as a helical segment. Residues Thr-431–Glu-442 lie on the Extracellular side of the membrane. The chain crosses the membrane as a helical span at residues Thr-443–Tyr-463. Residues Ser-464–Glu-517 lie on the Cytoplasmic side of the membrane.

This sequence belongs to the G-protein coupled receptor 1 family. In terms of tissue distribution, expressed in pharyngeal neurons I1 and I2, neurons ASG, AVL, CAN, PQR, vulva, intestine, rectal glands and rectal epithelial glands. Also expressed in neurons in ray 8 in males.

The protein localises to the cell membrane. In terms of biological role, receptor for dopamine. The activity of this receptor is mediated by G proteins which activate adenylyl cyclase. In terms of antagonist responses, would be classed with the D1-like dopamine receptor group. This is Dopamine receptor 4 (dop-4) from Caenorhabditis elegans.